We begin with the raw amino-acid sequence, 396 residues long: 1-deoxy-D-xylulose 5-phosphate reductoisomerase (396 aa).

Residues Thr13, Gly14, Ser15, Ile16, and Asn127 each contribute to the NADPH site. Lys128 serves as a coordination point for 1-deoxy-D-xylulose 5-phosphate. Glu129 lines the NADPH pocket. Asp153 contacts Mn(2+). Residues Ser154, Glu155, Ser184, and His207 each coordinate 1-deoxy-D-xylulose 5-phosphate. Glu155 contacts Mn(2+). Gly213 serves as a coordination point for NADPH. Positions 220, 225, 226, and 229 each coordinate 1-deoxy-D-xylulose 5-phosphate. Mn(2+) is bound at residue Glu229.

This sequence belongs to the DXR family. Requires Mg(2+) as cofactor. It depends on Mn(2+) as a cofactor.

It catalyses the reaction 2-C-methyl-D-erythritol 4-phosphate + NADP(+) = 1-deoxy-D-xylulose 5-phosphate + NADPH + H(+). Its pathway is isoprenoid biosynthesis; isopentenyl diphosphate biosynthesis via DXP pathway; isopentenyl diphosphate from 1-deoxy-D-xylulose 5-phosphate: step 1/6. In terms of biological role, catalyzes the NADPH-dependent rearrangement and reduction of 1-deoxy-D-xylulose-5-phosphate (DXP) to 2-C-methyl-D-erythritol 4-phosphate (MEP). In Pseudomonas fluorescens (strain ATCC BAA-477 / NRRL B-23932 / Pf-5), this protein is 1-deoxy-D-xylulose 5-phosphate reductoisomerase.